Reading from the N-terminus, the 326-residue chain is Beta-ketoacyl-[acyl-carrier-protein] synthase III (326 aa).

Residues C111 and H253 contribute to the active site. Positions 254–258 (QANSR) are ACP-binding. N283 is an active-site residue.

It belongs to the thiolase-like superfamily. FabH family. As to quaternary structure, homodimer.

Its subcellular location is the cytoplasm. The enzyme catalyses malonyl-[ACP] + acetyl-CoA + H(+) = 3-oxobutanoyl-[ACP] + CO2 + CoA. Its pathway is lipid metabolism; fatty acid biosynthesis. In terms of biological role, catalyzes the condensation reaction of fatty acid synthesis by the addition to an acyl acceptor of two carbons from malonyl-ACP. Catalyzes the first condensation reaction which initiates fatty acid synthesis and may therefore play a role in governing the total rate of fatty acid production. Possesses both acetoacetyl-ACP synthase and acetyl transacylase activities. Its substrate specificity determines the biosynthesis of branched-chain and/or straight-chain of fatty acids. The polypeptide is Beta-ketoacyl-[acyl-carrier-protein] synthase III (Latilactobacillus sakei subsp. sakei (strain 23K) (Lactobacillus sakei subsp. sakei)).